The chain runs to 187 residues: GTP cyclohydrolase 1 (187 aa).

Zn(2+) contacts are provided by Cys76, His79, and Cys148.

Belongs to the GTP cyclohydrolase I family. Homomer.

It carries out the reaction GTP + H2O = 7,8-dihydroneopterin 3'-triphosphate + formate + H(+). It functions in the pathway cofactor biosynthesis; 7,8-dihydroneopterin triphosphate biosynthesis; 7,8-dihydroneopterin triphosphate from GTP: step 1/1. This is GTP cyclohydrolase 1 from Streptococcus gordonii (strain Challis / ATCC 35105 / BCRC 15272 / CH1 / DL1 / V288).